We begin with the raw amino-acid sequence, 1023 residues long: 2-oxoglutarate dehydrogenase complex component E1 (1023 aa).

Residues 1 to 40 constitute a mitochondrion transit peptide; sequence MFHLRTCAAKLRPLTASQTVKTFSQNKPAAIRTFQQIRCY. Lys-74 is subject to N6-succinyllysine. Phosphoserine is present on Ser-100. The Ca(2+) site is built by His-143, Asp-156, and Asp-158. A thiamine diphosphate-binding site is contributed by Arg-312. The residue at position 401 (Lys-401) is an N6-acetyllysine. 3 residues coordinate thiamine diphosphate: Asp-411, Asn-444, and Ile-446. Mg(2+)-binding residues include Asp-411, Asn-444, and Ile-446. A Glycyl lysine isopeptide (Lys-Gly) (interchain with G-Cter in ubiquitin) cross-link involves residue Lys-534. At Lys-564 the chain carries N6-succinyllysine. Gln-676 contacts thiamine diphosphate. Residues 933 to 939 form a recognized by alloreactive CD8 cytotoxic T-lymphocytes in association with a class I MHC protein region; that stretch reads LSPFPFD. Residue Lys-970 is modified to N6-acetyllysine.

Belongs to the alpha-ketoglutarate dehydrogenase family. Homodimer. The 2-oxoglutarate dehydrogenase complex is composed of OGDH (2-oxoglutarate dehydrogenase; E1), DLST (dihydrolipoamide succinyltransferase; E2), DLD (dihydrolipoamide dehydrogenase; E3) and the assembly factor KGD4. It contains multiple copies of the three enzymatic components (E1, E2 and E3). In the nucleus, the 2-oxoglutarate dehydrogenase complex associates with KAT2A. Interacts with ABHD11; this interaction maintains the functional lipoylation of the 2-oxoglutarate dehydrogenase complex. It depends on thiamine diphosphate as a cofactor. The cofactor is Mg(2+).

It localises to the mitochondrion. Its subcellular location is the nucleus. The enzyme catalyses N(6)-[(R)-lipoyl]-L-lysyl-[protein] + 2-oxoglutarate + H(+) = N(6)-[(R)-S(8)-succinyldihydrolipoyl]-L-lysyl-[protein] + CO2. Calcium ions and ADP stimulate, whereas ATP and NADH reduce catalytic activity. Functionally, 2-oxoglutarate dehydrogenase (E1o) component of the 2-oxoglutarate dehydrogenase complex (OGDHC). Participates in the first step, rate limiting for the overall conversion of 2-oxoglutarate to succinyl-CoA and CO(2) catalyzed by the whole OGDHC. Catalyzes the irreversible decarboxylation of 2-oxoglutarate (alpha-ketoglutarate) via the thiamine diphosphate (ThDP) cofactor and subsequent transfer of the decarboxylated acyl intermediate on an oxidized dihydrolipoyl group that is covalently amidated to the E2 enzyme (dihydrolipoyllysine-residue succinyltransferase or DLST). Plays a key role in the Krebs (citric acid) cycle, which is a common pathway for oxidation of fuel molecules, including carbohydrates, fatty acids, and amino acids. Can catalyze the decarboxylation of 2-oxoadipate in vitro, but at a much lower rate than 2-oxoglutarate. Mainly active in the mitochondrion. A fraction of the 2-oxoglutarate dehydrogenase complex also localizes in the nucleus and is required for lysine succinylation of histones: associates with KAT2A on chromatin and provides succinyl-CoA to histone succinyltransferase KAT2A. The polypeptide is 2-oxoglutarate dehydrogenase complex component E1 (Mus musculus (Mouse)).